Reading from the N-terminus, the 360-residue chain is Variable large protein 18 (360 aa).

Positions 1 to 26 (MRKRISAIINKLNISIMMMIVVLMIG) are cleaved as a signal peptide. A lipid anchor (N-palmitoyl cysteine) is attached at Cys-27. Residue Cys-27 is the site of S-diacylglycerol cysteine attachment.

It belongs to the variable large protein (Vlp) family. Alpha subfamily.

It localises to the cell outer membrane. In terms of biological role, the Vlp and Vsp proteins are antigenically distinct proteins, only one vlp or vsp gene is transcriptionally active at any one time. Switching between these genes is a mechanism of host immune response evasion. This chain is Variable large protein 18, found in Borrelia hermsii.